We begin with the raw amino-acid sequence, 172 residues long: MLSCESFKIKGREIIICVIWEEGIQGIVYSLDGREFLEKQLSRLISMLNKRGVSLSLKERHSKYPELVFNVLTGKISNEEGFEELSLEGLTDFEIRVYSWLVKNVKRGEVITYGKVAKELKTSALAIGGAMKRNPYPIVVPCHRVVGKKDPWLYTPKPEYKKFLLEVEGWTS.

Cys142 (nucleophile; methyl group acceptor) is an active-site residue.

It belongs to the MGMT family.

It is found in the cytoplasm. The catalysed reaction is a 6-O-methyl-2'-deoxyguanosine in DNA + L-cysteinyl-[protein] = S-methyl-L-cysteinyl-[protein] + a 2'-deoxyguanosine in DNA. It catalyses the reaction a 4-O-methyl-thymidine in DNA + L-cysteinyl-[protein] = a thymidine in DNA + S-methyl-L-cysteinyl-[protein]. Functionally, involved in the cellular defense against the biological effects of O6-methylguanine (O6-MeG) and O4-methylthymine (O4-MeT) in DNA. Repairs the methylated nucleobase in DNA by stoichiometrically transferring the methyl group to a cysteine residue in the enzyme. This is a suicide reaction: the enzyme is irreversibly inactivated. The chain is Methylated-DNA--protein-cysteine methyltransferase from Pyrococcus abyssi (strain GE5 / Orsay).